A 237-amino-acid polypeptide reads, in one-letter code: tRNA1(Val) (adenine(37)-N6)-methyltransferase (237 aa).

This sequence belongs to the methyltransferase superfamily. tRNA (adenine-N(6)-)-methyltransferase family.

It is found in the cytoplasm. The catalysed reaction is adenosine(37) in tRNA1(Val) + S-adenosyl-L-methionine = N(6)-methyladenosine(37) in tRNA1(Val) + S-adenosyl-L-homocysteine + H(+). Functionally, specifically methylates the adenine in position 37 of tRNA(1)(Val) (anticodon cmo5UAC). This is tRNA1(Val) (adenine(37)-N6)-methyltransferase from Bacteroides fragilis (strain ATCC 25285 / DSM 2151 / CCUG 4856 / JCM 11019 / LMG 10263 / NCTC 9343 / Onslow / VPI 2553 / EN-2).